Here is a 162-residue protein sequence, read N- to C-terminus: UPF0114 protein PST_0950 (162 aa).

Transmembrane regions (helical) follow at residues 15 to 35 (LLAP…IKFF), 53 to 73 (LVLT…LVMV), and 136 to 156 (LMWY…MGYM).

Belongs to the UPF0114 family.

It localises to the cell membrane. This is UPF0114 protein PST_0950 from Stutzerimonas stutzeri (strain A1501) (Pseudomonas stutzeri).